Reading from the N-terminus, the 288-residue chain is Male determiner protein Nix (288 aa).

3 RRM domains span residues 19–94 (YCIY…LPLS), 108–179 (IVVY…KVER), and 205–282 (RSIG…FVPE).

Functionally, male determiner protein (M-factor) that controls male somatic sexual differentiation. Acts as a dominant factor that regulates the mRNA splicing of doublesex (dsx) or fruitless (fru) transcripts and promotes expression of male splice forms of dsx and fru. This Aedes aegypti (Yellowfever mosquito) protein is Male determiner protein Nix.